A 78-amino-acid chain; its full sequence is Large ribosomal subunit protein bL28 (78 aa).

The tract at residues 1 to 23 (MSRVCQVTGKRPITGNNVSHSKR) is disordered.

The protein belongs to the bacterial ribosomal protein bL28 family.

The chain is Large ribosomal subunit protein bL28 from Marinomonas sp. (strain MWYL1).